The primary structure comprises 218 residues: MNQLSLLAEFGEPITRVENALAALREGRGVLLLDDEDRENEGDIIYSVEHLTTAQMALMIRECSGIVCLCLTDEHANKLQLPPMVINNNSANQTAFTISIEAKHGVTTGVSAQDRVTTIKTAANRDAKASDLAHPGHVFPLRARAGGVMSRRGHTEGTVDLMQMAGLMPAGVLCELANEDGSMAKTPEIIAFGLKHNMPVLTIEDMVMYRNQYDLKLA.

Residues 38-39 (RE), Asp-43, 151-155 (RRGHT), and Glu-175 each bind D-ribulose 5-phosphate. Glu-39 serves as a coordination point for Mg(2+). Residue His-154 participates in Mg(2+) binding.

It belongs to the DHBP synthase family. Homodimer. Mg(2+) serves as cofactor. Requires Mn(2+) as cofactor.

The catalysed reaction is D-ribulose 5-phosphate = (2S)-2-hydroxy-3-oxobutyl phosphate + formate + H(+). It functions in the pathway cofactor biosynthesis; riboflavin biosynthesis; 2-hydroxy-3-oxobutyl phosphate from D-ribulose 5-phosphate: step 1/1. In terms of biological role, catalyzes the conversion of D-ribulose 5-phosphate to formate and 3,4-dihydroxy-2-butanone 4-phosphate. The polypeptide is 3,4-dihydroxy-2-butanone 4-phosphate synthase (Shewanella frigidimarina (strain NCIMB 400)).